We begin with the raw amino-acid sequence, 355 residues long: Chorismate synthase (355 aa).

Residue Arg48 participates in NADP(+) binding. Residues 126 to 128 (RSS), Gly278, 293 to 297 (KPIPS), and Arg319 contribute to the FMN site.

The protein belongs to the chorismate synthase family. In terms of assembly, homotetramer. It depends on FMNH2 as a cofactor.

The catalysed reaction is 5-O-(1-carboxyvinyl)-3-phosphoshikimate = chorismate + phosphate. Its pathway is metabolic intermediate biosynthesis; chorismate biosynthesis; chorismate from D-erythrose 4-phosphate and phosphoenolpyruvate: step 7/7. Catalyzes the anti-1,4-elimination of the C-3 phosphate and the C-6 proR hydrogen from 5-enolpyruvylshikimate-3-phosphate (EPSP) to yield chorismate, which is the branch point compound that serves as the starting substrate for the three terminal pathways of aromatic amino acid biosynthesis. This reaction introduces a second double bond into the aromatic ring system. This is Chorismate synthase from Oleidesulfovibrio alaskensis (strain ATCC BAA-1058 / DSM 17464 / G20) (Desulfovibrio alaskensis).